Reading from the N-terminus, the 322-residue chain is Pyrroline-5-carboxylate reductase (322 aa).

2 consecutive transmembrane segments (helical) span residues 9–29 (YPNV…VGLL) and 117–137 (ILIS…LHFW). Residues 302–322 (LSQSAGSHGEDNTTDSKTSRA) form a disordered region. Asn313 is a glycosylation site (N-linked (GlcNAc...) asparagine).

It belongs to the pyrroline-5-carboxylate reductase family.

The protein localises to the membrane. The catalysed reaction is L-proline + NADP(+) = (S)-1-pyrroline-5-carboxylate + NADPH + 2 H(+). The enzyme catalyses L-proline + NAD(+) = (S)-1-pyrroline-5-carboxylate + NADH + 2 H(+). It participates in alkaloid biosynthesis. Its function is as follows. Pyrroline-5-carboxylate reductase; part of the gene cluster that mediates the biosynthesis of paraherquamide, a fungal indole alkaloid that belongs to a family of natural products containing a characteristic bicyclo[2.2.2]diazaoctane core. The first steps in the biosynthesis of paraherquamide is the production of the beta-methyl-proline precursor from L-isoleucine. They require oxidation of a terminally hydroxylated L-isoleucine to the corresponding aldehyde by enzymes which have still to be identified. Spontaneous cyclization and dehydration would yield the 4-methyl pyrolline-5-carboxylic acid, which is then reduced by the pyrroline-5-carboxylate reductase phqD leading to the beta-methyl-proline precursor. The next step of paraherquamide biosynthesis involves coupling of beta-methyl-proline and L-tryptophan by the bimodular NRPS phqB, to produce a monooxopiperazine intermediate. The reductase (R) domain of phqB utilizes NADPH for hydride transfer to reduce the thioester bond of the T domain-tethered linear dipeptide to a hemithioaminal intermediate, which spontaneously cleaves the C-S bond to release the aldehyde product. This compound undergoes spontaneous cyclization and dehydration to give a dienamine which is reverse prenylated at C-2 by the reverse prenyltransferase phqJ. The other prenyltransferase present in the cluster, phqI may be a redundant gene in the pathway. During biosynthetic assembly, the key step to produce the polycyclic core is catalyzed by the bifunctional reductase and intramolecular [4+2] Diels-Alderase, phqE, resulting in formation of the [2.2.2] diazaoctane intermediate preparaherquamide. Following formation of preparaherquamide, an indole 2,3-epoxidation-initiated pinacol-like rearrangement is catalyzed by the phqK FAD-dependent monooxygenase. The prenyltransferase phqA, the cytochrome P450 monooxygenase phqL, and the FAD-linked oxidoreductase phqH (or the cytochrome P450 monooxygenase phqM), are proposed to be involved in the formation of the pyran ring. The FAD-dependent monooxygenase phqK is likely responsible for generation of the spiro-oxindole, and the N-methylation is likely mediated by the phqN methyltransferase leading to the isolable natural product paraherquamide F. However, the order of these biosynthetic steps has still to be determined. In late-stage paraherquamide biosynthesis, the third P450 monooxygenase, phqO, is probably responsible for the C-14 hydroxylation, transforming paraherquamide F to paraherquamide G, and paraherquamide E to the final product paraherquamide A. The expansion from the 6-membered ring pyran (in paraherquamides F and G) to the 7-membered dioxepin ring (in paraherquamides A and E) represents a poorly understood but intriguing process that probably involves the 2-oxoglutarate-dependent dioxygenase phqC. Finally, the remaining members of the paraherquamide cluster, including phqI as well as phqM (or phqH), do not have a clearly prescribed role and appear to be redundant. This Penicillium fellutanum protein is Pyrroline-5-carboxylate reductase.